The following is a 1201-amino-acid chain: Putative disease resistance protein At4g19050 (1201 aa).

33–40 (GEAGIGKT) contributes to the ATP binding site. LRR repeat units lie at residues 469–491 (KLRV…SGLQ), 492–514 (GLHV…FFKN), 517–539 (QLQS…EKLS), 540–562 (MLRC…IVET), 680–701 (ELRI…IADV), 703–725 (NLNK…EKLT), 726–748 (HLEV…FGEM), 750–771 (YLHE…ISEL), 773–795 (NLKE…EKLT), 796–818 (NLEI…FENL), 820–841 (CLHK…ISEL), 843–865 (NLKE…EKLT), 866–888 (HLVI…FESM), and 890–911 (YLCE…PKQS). The segment covering 1162–1180 (DEPRIGARITDEISEDQPH) has biased composition (basic and acidic residues). The interval 1162 to 1201 (DEPRIGARITDEISEDQPHKNTIGPETQTPTQPTKATDTV) is disordered. Polar residues predominate over residues 1185–1201 (GPETQTPTQPTKATDTV).

It belongs to the disease resistance NB-LRR family.

In terms of biological role, potential disease resistance protein. The chain is Putative disease resistance protein At4g19050 from Arabidopsis thaliana (Mouse-ear cress).